The following is a 232-amino-acid chain: tRNA (guanine-N(1)-)-methyltransferase (232 aa).

Gly-116 contacts S-adenosyl-L-methionine.

This sequence belongs to the RNA methyltransferase TrmD family. As to quaternary structure, homodimer.

It localises to the cytoplasm. It carries out the reaction guanosine(37) in tRNA + S-adenosyl-L-methionine = N(1)-methylguanosine(37) in tRNA + S-adenosyl-L-homocysteine + H(+). Functionally, specifically methylates guanosine-37 in various tRNAs. The sequence is that of tRNA (guanine-N(1)-)-methyltransferase from Chlorobium luteolum (strain DSM 273 / BCRC 81028 / 2530) (Pelodictyon luteolum).